A 163-amino-acid chain; its full sequence is Crossover junction endodeoxyribonuclease RuvC (163 aa).

Active-site residues include D9, E76, and D148. The Mg(2+) site is built by D9, E76, and D148.

The protein belongs to the RuvC family. As to quaternary structure, homodimer which binds Holliday junction (HJ) DNA. The HJ becomes 2-fold symmetrical on binding to RuvC with unstacked arms; it has a different conformation from HJ DNA in complex with RuvA. In the full resolvosome a probable DNA-RuvA(4)-RuvB(12)-RuvC(2) complex forms which resolves the HJ. It depends on Mg(2+) as a cofactor.

Its subcellular location is the cytoplasm. The catalysed reaction is Endonucleolytic cleavage at a junction such as a reciprocal single-stranded crossover between two homologous DNA duplexes (Holliday junction).. Its function is as follows. The RuvA-RuvB-RuvC complex processes Holliday junction (HJ) DNA during genetic recombination and DNA repair. Endonuclease that resolves HJ intermediates. Cleaves cruciform DNA by making single-stranded nicks across the HJ at symmetrical positions within the homologous arms, yielding a 5'-phosphate and a 3'-hydroxyl group; requires a central core of homology in the junction. The consensus cleavage sequence is 5'-(A/T)TT(C/G)-3'. Cleavage occurs on the 3'-side of the TT dinucleotide at the point of strand exchange. HJ branch migration catalyzed by RuvA-RuvB allows RuvC to scan DNA until it finds its consensus sequence, where it cleaves and resolves the cruciform DNA. The chain is Crossover junction endodeoxyribonuclease RuvC from Nostoc sp. (strain PCC 7120 / SAG 25.82 / UTEX 2576).